The sequence spans 231 residues: Protein OPG061 (231 aa).

It belongs to the orthopoxvirus OPG058 family.

The protein resides in the host nucleus. Its subcellular location is the host nucleolus. This chain is Protein OPG061 (OPG061), found in Vaccinia virus (strain Western Reserve) (VACV).